Reading from the N-terminus, the 171-residue chain is Homeobox protein engrailed-1-B (171 aa).

2 disordered regions span residues 1 to 41 and 60 to 86; these read EDPG…NAAP and YSDRPSSGPRTRKLKKKKSEKEDKRPR. Low complexity predominate over residues 15 to 29; that stretch reads PDSDTPSDSSKGSDS. Residues 82–141 constitute a DNA-binding region (homeobox); that stretch reads DKRPRTAFTAEQLQRLKAEFQANRYITEQRRQTLAQELSLNESQIKIWFQNKRAKIKKAS.

The protein belongs to the engrailed homeobox family.

The protein localises to the nucleus. Its function is as follows. Required for proper formation of the apical ectodermal ridge and correct dorsal-ventral patterning in the limb. In Xenopus laevis (African clawed frog), this protein is Homeobox protein engrailed-1-B (en1-b).